Reading from the N-terminus, the 305-residue chain is MNQIQVFISGLILLLPGAVESHTAVQGLAGHPVTLPCIYSTHLGGIVPMCWGLGECRHSYCIRSLIWTNGYTVTHQRNSLYQLKGNISEGNVSLTIENTVVGDGGPYCCVVEIPGAFHFVDYMLEVKPEISTSPPTRPTATGRPTTISTRSTHVPTSTRVSTSTSPTPAHTETYKPEATTFYPDQTTAEVTETLPDTPADWHNTVTSSDDPWDDNTEVIPPQKPQKNLNKGFYVGISIAALLILMLLSTMVITRYVVMKRKSESLSFVAFPISKIGASPKKVVERTRCEDQVYIIEDTPYPEEES.

Residues 1 to 21 (MNQIQVFISGLILLLPGAVES) form the signal peptide. One can recognise an Ig-like V-type domain in the interval 22–125 (HTAVQGLAGH…AFHFVDYMLE (104 aa)). Residues 22-231 (HTAVQGLAGH…QKPQKNLNKG (210 aa)) are Extracellular-facing. 3 disulfide bridges follow: Cys-37–Cys-109, Cys-50–Cys-61, and Cys-56–Cys-108. Residues Asn-86 and Asn-91 are each glycosylated (N-linked (GlcNAc...) asparagine). A disordered region spans residues 130-174 (ISTSPPTRPTATGRPTTISTRSTHVPTSTRVSTSTSPTPAHTETY). Low complexity predominate over residues 131–167 (STSPPTRPTATGRPTTISTRSTHVPTSTRVSTSTSPT). The chain crosses the membrane as a helical span at residues 232-252 (FYVGISIAALLILMLLSTMVI). The Cytoplasmic portion of the chain corresponds to 253–305 (TRYVVMKRKSESLSFVAFPISKIGASPKKVVERTRCEDQVYIIEDTPYPEEES).

The protein belongs to the immunoglobulin superfamily. TIM family. As to quaternary structure, homodimer. Expressed on late differentiated Th2 cells. Expressed also on all splenic B-cells, with increased levels on germinal center B-cells, in the liver, especially in bile duct epithelial cells, and in renal tubule cells. Within retina, mainly expressed in Mueller cells.

The protein resides in the cell membrane. Its function is as follows. Cell surface glycoprotein that participates in iron homeostasis in the liver, the kidney, the retina and oligodendrocytes by acting as a receptor of H-ferritin. Mechanistically, mediates iron-containing ferritin uptake via an endocytic pathway, trafficking to endosomes and subsequently to lysosomes. Plays also an important role in the regulation of Th2 immunity. Receptor for SEMA4A involved in the regulation of T-cell function, enhancing T-cell activation. This Mus musculus (Mouse) protein is T-cell immunoglobulin and mucin domain-containing protein 2 (Timd2).